The sequence spans 485 residues: FAD-dependent monooxygenase elcH (485 aa).

The signal sequence occupies residues 1 to 19; the sequence is MFTLRSLAILAVFAATALA. Asp-59 and Gly-73 together coordinate FAD. 3 N-linked (GlcNAc...) asparagine glycosylation sites follow: Asn-126, Asn-147, and Asn-157.

It belongs to the paxM FAD-dependent monooxygenase family. FAD serves as cofactor.

The protein operates within secondary metabolite biosynthesis. Its function is as follows. FAD-dependent monooxygenase; part of the gene cluster that mediates the biosynthesis of elsinochrome C, a perelyenequinone phytotoxin structurally similar to cercosporin. The first step of elsinochrome C biosynthesis is performed by the polyketide synthase elcA which catalyzes the formation of nor-toralactone. The starter unit acyltransferase (SAT) domain of elcA initiates polyketide extension by the selective utilization of acetyl-CoA, which is elongated to the heptaketide in the beta-ketoacyl synthase (KS) domain by successive condensations with six malonyl units introduced by the malonyl acyltransferase (MAT) domain. The product template (PT) domain catalyzes C4-C9 and C2-C11 aldol cyclizations and dehydrations to a trihydroxynaphthalene, which is thought to be delivered to the thioesterase (TE) domain for product release. The bifunctional enzyme elcB then methylates nor-toralactone to toralactone before conducting an unusual oxidative aromatic ring opening. The next step in perylenequinone biosynthesis is an O-methylation at the nascent OH-6 of the elcB product performed by the O-methyltransferase elcD. The oxidative coupling of the two monomeric naphthol units in perylenequinone biosynthesis is catalyzed by the FAD-dependent monooxygenase elcE and the multicopper oxidase elcG. ElcG might catalyze the first intermolecular coupling in a regio- and stereo-selective manner via a phenol radical coupling mechanism and the elcE could forge the second C-C bond intramolecularly via a hydride transfer mechanism. The fasciclin domain-containing protein elcF might also play a role duting this step. The last piece of the puzzle in the biosynthesis of elsinochrome C is the additional annulation by enolate coupling to afford the dihydrobenzo(ghi)perylenequinone system, catalyzed by the FAD-dependent monooxygenase elcH. This is FAD-dependent monooxygenase elcH from Phaeosphaeria nodorum (strain SN15 / ATCC MYA-4574 / FGSC 10173) (Glume blotch fungus).